The following is a 204-amino-acid chain: Prephenate decarboxylase (204 aa).

It belongs to the prephenate decarboxylase family.

It localises to the cytoplasm. The catalysed reaction is prephenate + H(+) = 3-[(4R)-4-hydroxycyclohexa-1,5-dien-1-yl]-2-oxopropanoate + CO2. Its pathway is antibiotic biosynthesis; bacilysin biosynthesis. Part of the bacABCDEF operon responsible for the biosynthesis of the nonribosomally synthesized dipeptide antibiotic bacilysin, composed of L-alanine and L-anticapsin. Bacilysin is an irreversible inactivator of the glutaminase domain of glucosamine synthetase. BacA is an unusual prephenate decarboxylase that avoids the typical aromatization of the cyclohexadienol ring of prephenate. BacA catalyzes the protonation of prephenate (1-carboxy-4-hydroxy-alpha-oxo-2,5-cyclohexadiene-1-propanoic acid) at C6 position, followed by a decarboxylation to produce the endocyclic-delta(4),delta(8)-7R-dihydro-hydroxyphenylpyruvate (en-H2HPP). En-H2HPP is able to undergo a slow nonenzymatic isomerization to produce the exocyclic-delta(3),delta(5)-dihydro-hydroxyphenylpyruvate (ex-H2HPP). BacA isomerizes only the pro-R double bond in prephenate. The polypeptide is Prephenate decarboxylase (Bacillus subtilis (strain 168)).